The following is a 315-amino-acid chain: Small ribosomal subunit protein uS2 (315 aa).

Residues 250-315 (LLEQGDAAKA…TESEKAPVSE (66 aa)) are disordered. Basic and acidic residues-rich tracts occupy residues 272-282 (VSAKNEAKSED) and 297-315 (TEAK…PVSE).

It belongs to the universal ribosomal protein uS2 family.

The protein is Small ribosomal subunit protein uS2 of Clavibacter michiganensis subsp. michiganensis (strain NCPPB 382).